A 130-amino-acid chain; its full sequence is Small ribosomal subunit protein uS11 (130 aa).

The protein belongs to the universal ribosomal protein uS11 family. As to quaternary structure, part of the 30S ribosomal subunit. Interacts with proteins S7 and S18. Binds to IF-3.

Functionally, located on the platform of the 30S subunit, it bridges several disparate RNA helices of the 16S rRNA. Forms part of the Shine-Dalgarno cleft in the 70S ribosome. This is Small ribosomal subunit protein uS11 from Shewanella denitrificans (strain OS217 / ATCC BAA-1090 / DSM 15013).